We begin with the raw amino-acid sequence, 101 residues long: Protein translation factor SUI1 homolog (101 aa).

This sequence belongs to the SUI1 family.

The polypeptide is Protein translation factor SUI1 homolog (Aeropyrum pernix (strain ATCC 700893 / DSM 11879 / JCM 9820 / NBRC 100138 / K1)).